The following is a 268-amino-acid chain: Hydroxyethylthiazole kinase (268 aa).

Met-47 serves as a coordination point for substrate. Arg-122 and Thr-168 together coordinate ATP. Ala-195 serves as a coordination point for substrate.

Belongs to the Thz kinase family. Requires Mg(2+) as cofactor.

It carries out the reaction 5-(2-hydroxyethyl)-4-methylthiazole + ATP = 4-methyl-5-(2-phosphooxyethyl)-thiazole + ADP + H(+). It participates in cofactor biosynthesis; thiamine diphosphate biosynthesis; 4-methyl-5-(2-phosphoethyl)-thiazole from 5-(2-hydroxyethyl)-4-methylthiazole: step 1/1. Catalyzes the phosphorylation of the hydroxyl group of 4-methyl-5-beta-hydroxyethylthiazole (THZ). The sequence is that of Hydroxyethylthiazole kinase from Rhizobium rhizogenes (strain K84 / ATCC BAA-868) (Agrobacterium radiobacter).